A 234-amino-acid polypeptide reads, in one-letter code: Uridylate kinase (234 aa).

ATP is bound by residues lysine 8–glycine 11, glycine 51, and arginine 55. UMP contacts are provided by residues aspartate 68 and threonine 129 to threonine 136. ATP contacts are provided by threonine 156, tyrosine 162, and aspartate 165.

Belongs to the UMP kinase family. As to quaternary structure, homohexamer.

The protein resides in the cytoplasm. It carries out the reaction UMP + ATP = UDP + ADP. The protein operates within pyrimidine metabolism; CTP biosynthesis via de novo pathway; UDP from UMP (UMPK route): step 1/1. Its activity is regulated as follows. Inhibited by UTP. Its function is as follows. Catalyzes the reversible phosphorylation of UMP to UDP. The sequence is that of Uridylate kinase from Fervidobacterium nodosum (strain ATCC 35602 / DSM 5306 / Rt17-B1).